We begin with the raw amino-acid sequence, 24 residues long: Coenzyme PQQ synthesis protein A (24 aa).

The segment at residues 16 to 20 (EITMY) is a cross-link (pyrroloquinoline quinone (Glu-Tyr)).

This sequence belongs to the PqqA family.

It functions in the pathway cofactor biosynthesis; pyrroloquinoline quinone biosynthesis. Its function is as follows. Required for coenzyme pyrroloquinoline quinone (PQQ) biosynthesis. PQQ is probably formed by cross-linking a specific glutamate to a specific tyrosine residue and excising these residues from the peptide. The protein is Coenzyme PQQ synthesis protein A of Cupriavidus taiwanensis (strain DSM 17343 / BCRC 17206 / CCUG 44338 / CIP 107171 / LMG 19424 / R1) (Ralstonia taiwanensis (strain LMG 19424)).